Reading from the N-terminus, the 180-residue chain is Protein SPO16 homolog (180 aa).

As to quaternary structure, homooligomer. Interacts with SHOC, SYCP1 and SYCE3.

The protein localises to the chromosome. Functionally, plays a key role in reinforcing the integrity of the central element of the synaptonemal complex (SC) thereby stabilizing SC, ensuring progression of meiotic prophase I in male and female germ cells. Promotes homologous recombination and crossing-over in meiotic prophase I via its association with SHOC1. Required for the localization of TEX11 and MSH4 to recombination intermediates. This is Protein SPO16 homolog from Homo sapiens (Human).